Consider the following 1415-residue polypeptide: DNA-directed RNA polymerase subunit beta' (1415 aa).

Zn(2+)-binding residues include cysteine 70, cysteine 72, cysteine 85, and cysteine 88. Positions 461, 463, and 465 each coordinate Mg(2+). Residues cysteine 820, cysteine 894, cysteine 901, and cysteine 904 each contribute to the Zn(2+) site. Residues 1382 to 1415 (ERERAQAIADEEQSLFIEPPPVVQATTEGEGDNA) form a disordered region.

Belongs to the RNA polymerase beta' chain family. In terms of assembly, the RNAP catalytic core consists of 2 alpha, 1 beta, 1 beta' and 1 omega subunit. When a sigma factor is associated with the core the holoenzyme is formed, which can initiate transcription. Mg(2+) serves as cofactor. The cofactor is Zn(2+).

It catalyses the reaction RNA(n) + a ribonucleoside 5'-triphosphate = RNA(n+1) + diphosphate. DNA-dependent RNA polymerase catalyzes the transcription of DNA into RNA using the four ribonucleoside triphosphates as substrates. This Cupriavidus pinatubonensis (strain JMP 134 / LMG 1197) (Cupriavidus necator (strain JMP 134)) protein is DNA-directed RNA polymerase subunit beta'.